A 286-amino-acid polypeptide reads, in one-letter code: 4-diphosphocytidyl-2-C-methyl-D-erythritol kinase (286 aa).

K11 is a catalytic residue. 94 to 104 is an ATP binding site; the sequence is PMGGGIGGGSS. D136 is a catalytic residue.

It belongs to the GHMP kinase family. IspE subfamily.

The enzyme catalyses 4-CDP-2-C-methyl-D-erythritol + ATP = 4-CDP-2-C-methyl-D-erythritol 2-phosphate + ADP + H(+). It participates in isoprenoid biosynthesis; isopentenyl diphosphate biosynthesis via DXP pathway; isopentenyl diphosphate from 1-deoxy-D-xylulose 5-phosphate: step 3/6. Catalyzes the phosphorylation of the position 2 hydroxy group of 4-diphosphocytidyl-2C-methyl-D-erythritol. The polypeptide is 4-diphosphocytidyl-2-C-methyl-D-erythritol kinase (Pseudomonas entomophila (strain L48)).